A 195-amino-acid polypeptide reads, in one-letter code: MRKEGKFIIIGRPGSGKSTCIMLLLEKLRASGTKVGGIRTPELRERGIRKGFAVEDILTGQSDIFASTDFREGPSVSKYRVSVERFESIAIPALRRALEECEVVVIDEIGKMELLSRNFLEVVRDIWESEIISVGTAPLVRIEEIEKLKSSSEVIIIERGDSERISNYLFNRISDLLRVSRSSHRPSPRGTLSFL.

Residues 11–18 and 103–110 contribute to the ATP site; these read GRPGSGKS and VVVIDEIG.

Belongs to the THEP1 NTPase family.

The catalysed reaction is a ribonucleoside 5'-triphosphate + H2O = a ribonucleoside 5'-diphosphate + phosphate + H(+). Functionally, has nucleotide phosphatase activity towards ATP, GTP, CTP, TTP and UTP. May hydrolyze nucleoside diphosphates with lower efficiency. The sequence is that of Nucleoside-triphosphatase THEP1 from Korarchaeum cryptofilum (strain OPF8).